Consider the following 158-residue polypeptide: Placenta growth factor (158 aa).

A signal peptide (or 26) is located at residues 1–23 (MLAMKLFTCFLQVLAGLAVHSQG). N-linked (GlcNAc...) asparagine glycosylation is found at asparagine 29 and asparagine 30. 3 disulfides stabilise this stretch: cysteine 48/cysteine 90, cysteine 79/cysteine 125, and cysteine 83/cysteine 127. N-linked (GlcNAc...) asparagine glycosylation is present at asparagine 97. The segment at 136–158 (AERRKTKGKRKQSKTPQTEEPHL) is disordered. The segment covering 137–148 (ERRKTKGKRKQS) has biased composition (basic residues).

This sequence belongs to the PDGF/VEGF growth factor family. As to quaternary structure, antiparallel homodimer; disulfide-linked. Also found as heterodimer with VEGFA/VEGF.

Its subcellular location is the secreted. Its function is as follows. Growth factor active in angiogenesis and endothelial cell growth, stimulating their proliferation and migration. It binds to the receptor FLT1/VEGFR-1. Also promotes cell tumor growth. The polypeptide is Placenta growth factor (Pgf) (Rattus norvegicus (Rat)).